The primary structure comprises 66 residues: Beta-defensin 107A (66 aa).

The signal sequence occupies residues 1–22 (MKIFFFIFAALFLLAQIFQART). 2 disulfide bridges follow: cysteine 37–cysteine 51 and cysteine 41–cysteine 60.

Belongs to the beta-defensin family.

Its subcellular location is the secreted. In terms of biological role, has antibacterial activity. The polypeptide is Beta-defensin 107A (DEFB107A) (Gorilla gorilla gorilla (Western lowland gorilla)).